We begin with the raw amino-acid sequence, 55 residues long: Ferredoxin (55 aa).

2 consecutive 4Fe-4S ferredoxin-type domains span residues 2–27 and 28–55; these read FVIN…TQGD and TQFV…PNQE. [4Fe-4S] cluster-binding residues include Cys-8, Cys-11, Cys-14, Cys-18, Cys-37, Cys-40, Cys-43, and Cys-47.

It depends on [4Fe-4S] cluster as a cofactor.

Its function is as follows. Ferredoxins are iron-sulfur proteins that transfer electrons in a wide variety of metabolic reactions. The polypeptide is Ferredoxin (Clostridium butyricum).